The primary structure comprises 626 residues: Threonine--tRNA ligase (626 aa).

The editing domain stretch occupies residues Met1–Val145. Residues Pro207 to Pro506 are catalytic. The Zn(2+) site is built by Cys299, His351, and His475.

Belongs to the class-II aminoacyl-tRNA synthetase family. Homodimer. Zn(2+) is required as a cofactor.

The protein localises to the cytoplasm. It carries out the reaction tRNA(Thr) + L-threonine + ATP = L-threonyl-tRNA(Thr) + AMP + diphosphate + H(+). Its function is as follows. Catalyzes the attachment of threonine to tRNA(Thr) in a two-step reaction: L-threonine is first activated by ATP to form Thr-AMP and then transferred to the acceptor end of tRNA(Thr). Also edits incorrectly charged L-seryl-tRNA(Thr). This chain is Threonine--tRNA ligase, found in Thermococcus kodakarensis (strain ATCC BAA-918 / JCM 12380 / KOD1) (Pyrococcus kodakaraensis (strain KOD1)).